We begin with the raw amino-acid sequence, 340 residues long: Glycerol-3-phosphate dehydrogenase [NAD(P)+] (340 aa).

4 residues coordinate NADPH: Ser-11, Trp-12, Arg-33, and Lys-106. Sn-glycerol 3-phosphate is bound by residues Lys-106, Gly-137, and Ser-139. Ala-141 contributes to the NADPH binding site. Lys-192, Asp-245, Ser-255, Arg-256, and Asn-257 together coordinate sn-glycerol 3-phosphate. The Proton acceptor role is filled by Lys-192. Residue Arg-256 coordinates NADPH. NADPH contacts are provided by Val-280 and Glu-282.

The protein belongs to the NAD-dependent glycerol-3-phosphate dehydrogenase family.

Its subcellular location is the cytoplasm. It carries out the reaction sn-glycerol 3-phosphate + NAD(+) = dihydroxyacetone phosphate + NADH + H(+). The enzyme catalyses sn-glycerol 3-phosphate + NADP(+) = dihydroxyacetone phosphate + NADPH + H(+). The protein operates within membrane lipid metabolism; glycerophospholipid metabolism. Functionally, catalyzes the reduction of the glycolytic intermediate dihydroxyacetone phosphate (DHAP) to sn-glycerol 3-phosphate (G3P), the key precursor for phospholipid synthesis. In Bacillus cereus (strain B4264), this protein is Glycerol-3-phosphate dehydrogenase [NAD(P)+].